The sequence spans 391 residues: uncharacterized protein (391 aa).

WD repeat units lie at residues 137–179 (VNDI…PILA) and 182–222 (PLSS…SAEE).

The protein localises to the cytoplasm. The protein resides in the nucleus. This is an uncharacterized protein from Schizosaccharomyces pombe (strain 972 / ATCC 24843) (Fission yeast).